We begin with the raw amino-acid sequence, 360 residues long: sn-glycerol-3-phosphate import ATP-binding protein UgpC (360 aa).

The 232-residue stretch at 4–235 folds into the ABC transporter domain; the sequence is LSLKGVRKSY…PATTFVASFI (232 aa). 37 to 44 is a binding site for ATP; it reads GPSGCGKS.

It belongs to the ABC transporter superfamily. sn-glycerol-3-phosphate importer (TC 3.A.1.1.3) family. The complex is composed of two ATP-binding proteins (UgpC), two transmembrane proteins (UgpA and UgpE) and a solute-binding protein (UgpB).

It is found in the cell inner membrane. It catalyses the reaction sn-glycerol 3-phosphate(out) + ATP + H2O = sn-glycerol 3-phosphate(in) + ADP + phosphate + H(+). Part of the ABC transporter complex UgpBAEC involved in sn-glycerol-3-phosphate (G3P) import. Responsible for energy coupling to the transport system. The polypeptide is sn-glycerol-3-phosphate import ATP-binding protein UgpC (Burkholderia thailandensis (strain ATCC 700388 / DSM 13276 / CCUG 48851 / CIP 106301 / E264)).